Reading from the N-terminus, the 1379-residue chain is DNA-directed RNA polymerase subunit beta (1379 aa).

It belongs to the RNA polymerase beta chain family. As to quaternary structure, the RNAP catalytic core consists of 2 alpha, 1 beta, 1 beta' and 1 omega subunit. When a sigma factor is associated with the core the holoenzyme is formed, which can initiate transcription.

The enzyme catalyses RNA(n) + a ribonucleoside 5'-triphosphate = RNA(n+1) + diphosphate. In terms of biological role, DNA-dependent RNA polymerase catalyzes the transcription of DNA into RNA using the four ribonucleoside triphosphates as substrates. This is DNA-directed RNA polymerase subunit beta from Rhizobium johnstonii (strain DSM 114642 / LMG 32736 / 3841) (Rhizobium leguminosarum bv. viciae).